The chain runs to 474 residues: Tocopherol cyclase, chloroplastic (474 aa).

A chloroplast-targeting transit peptide spans 1–65; that stretch reads MNLAVAAALP…TPTPQDRSLR (65 aa).

As to expression, present in all green tissues, both in bundle sheath and in mesophyll cells.

It localises to the plastid. Its subcellular location is the chloroplast. It carries out the reaction gamma-tocopherol = 2,3-dimethyl-6-phytylbenzene-1,4-diol. Its pathway is cofactor biosynthesis; tocopherol biosynthesis. Its function is as follows. Involved in the synthesis of tocopherols (vitamin E), which presumably protect photosynthetic complexes from oxidative stress. Catalyzes the conversion of 2,3-dimethyl-5-phytyl-1,4-hydroquinone (DMPQ) to gamma-tocopherol. This chain is Tocopherol cyclase, chloroplastic, found in Zea mays (Maize).